A 348-amino-acid polypeptide reads, in one-letter code: Glycerol-1-phosphate dehydrogenase [NAD(P)+] (348 aa).

NAD(+)-binding positions include 94–98 (GKVID) and Thr116. Asp121 serves as a coordination point for substrate. Ser125 serves as a coordination point for NAD(+). Asp168 provides a ligand contact to substrate. Residues Asp168 and His248 each coordinate Zn(2+). His252 serves as a coordination point for substrate. Position 264 (His264) interacts with Zn(2+).

It belongs to the glycerol-1-phosphate dehydrogenase family. As to quaternary structure, homooctamer. Zn(2+) serves as cofactor.

Its subcellular location is the cytoplasm. The catalysed reaction is sn-glycerol 1-phosphate + NAD(+) = dihydroxyacetone phosphate + NADH + H(+). The enzyme catalyses sn-glycerol 1-phosphate + NADP(+) = dihydroxyacetone phosphate + NADPH + H(+). Its pathway is membrane lipid metabolism; glycerophospholipid metabolism. Functionally, catalyzes the NAD(P)H-dependent reduction of dihydroxyacetonephosphate (DHAP or glycerone phosphate) to glycerol 1-phosphate (G1P). The G1P thus generated is used as the glycerophosphate backbone of phospholipids in the cellular membranes of Archaea. The chain is Glycerol-1-phosphate dehydrogenase [NAD(P)+] from Methanosphaera stadtmanae (strain ATCC 43021 / DSM 3091 / JCM 11832 / MCB-3).